A 474-amino-acid polypeptide reads, in one-letter code: Synaptotagmin-17 (474 aa).

The tract at residues W60–P117 is disordered. Over residues S96–P117 the composition is skewed to low complexity. S118 and S119 each carry phosphoserine. 2 C2 domains span residues Q184 to K310 and E321 to H455.

The protein belongs to the synaptotagmin family. Expressed in brain and kidney.

Its subcellular location is the membrane. Plays a role in dendrite formation by melanocytes. In Rattus norvegicus (Rat), this protein is Synaptotagmin-17 (Syt17).